A 281-amino-acid polypeptide reads, in one-letter code: 2,3,4,5-tetrahydropyridine-2,6-dicarboxylate N-succinyltransferase (281 aa).

Substrate contacts are provided by R108 and D145.

It belongs to the transferase hexapeptide repeat family. In terms of assembly, homotrimer.

It localises to the cytoplasm. It carries out the reaction (S)-2,3,4,5-tetrahydrodipicolinate + succinyl-CoA + H2O = (S)-2-succinylamino-6-oxoheptanedioate + CoA. Its pathway is amino-acid biosynthesis; L-lysine biosynthesis via DAP pathway; LL-2,6-diaminopimelate from (S)-tetrahydrodipicolinate (succinylase route): step 1/3. This Rhodopseudomonas palustris (strain ATCC BAA-98 / CGA009) protein is 2,3,4,5-tetrahydropyridine-2,6-dicarboxylate N-succinyltransferase.